Here is a 435-residue protein sequence, read N- to C-terminus: Islet cell autoantigen 1-like protein (435 aa).

The region spanning 44–247 (ASDAELDAKL…TAQMMSQIQE (204 aa)) is the AH domain. The disordered stretch occupies residues 391 to 435 (WASQEGSEHSDTLPVPSQHPKKLKYLGPLSNPDAIGHSDDELLNA). The segment covering 426–435 (GHSDDELLNA) has biased composition (basic and acidic residues).

This Rattus norvegicus (Rat) protein is Islet cell autoantigen 1-like protein (Ica1l).